The following is a 571-amino-acid chain: FAD-linked oxidoreductase patO (571 aa).

The first 23 residues, 1–23, serve as a signal peptide directing secretion; it reads MRLHQSPPRLLVCILSVLQVSAG. Residues N47, N101, N125, N179, N341, N374, N380, N421, N445, and N480 are each glycosylated (N-linked (GlcNAc...) asparagine). In terms of domain architecture, FAD-binding PCMH-type spans 115–294; it reads TLGAMVRYAV…YAVTVKTFPD (180 aa).

This sequence belongs to the oxygen-dependent FAD-linked oxidoreductase family. FAD is required as a cofactor.

Its subcellular location is the vacuole lumen. Its pathway is mycotoxin biosynthesis; patulin biosynthesis. Functionally, FAD-linked oxidoreductase; part of the gene cluster that mediates the biosynthesis of patulin, an acetate-derived tetraketide mycotoxin produced by several fungal species that shows antimicrobial properties against several bacteria. PatO acts with patJ in the vacuole to convert gentisyl alcohol to isoepoxydon. The pathway begins with the synthesis of 6-methylsalicylic acid by the polyketide synthase (PKS) patK via condensation of acetate and malonate units. The 6-methylsalicylic acid decarboxylase patG then catalyzes the decarboxylation of 6-methylsalicylic acid to yield m-cresol (also known as 3-methylphenol). These first reactions occur in the cytosol. The intermediate m-cresol is then transported into the endoplasmic reticulum where the cytochrome P450 monooxygenase patH converts it to m-hydroxybenzyl alcohol, which is further converted to gentisyl alcohol by the cytochrome P450 monooxygenase patI. The oxidoreductases patJ and patO further convert gentisyl alcohol to isoepoxydon in the vacuole. PatN catalyzes then the transformation of isoepoxydon into phyllostine. The cluster protein patF is responsible for the conversion from phyllostine to neopatulin whereas the alcohol dehydrogenase patD converts neopatulin to E-ascladiol. The steps between isoepoxydon and E-ascladiol occur in the cytosol, and E-ascladiol is probably secreted to the extracellular space by one of the cluster-specific transporters patC or patM. Finally, the secreted patulin synthase patE catalyzes the conversion of E-ascladiol to patulin. The chain is FAD-linked oxidoreductase patO from Penicillium expansum (Blue mold rot fungus).